We begin with the raw amino-acid sequence, 140 residues long: Nucleoside diphosphate kinase (140 aa).

The ATP site is built by K11, F59, R87, T93, R104, and N114. The active-site Pros-phosphohistidine intermediate is H117.

This sequence belongs to the NDK family. In terms of assembly, homotetramer. Mg(2+) serves as cofactor.

The protein localises to the cytoplasm. It catalyses the reaction a 2'-deoxyribonucleoside 5'-diphosphate + ATP = a 2'-deoxyribonucleoside 5'-triphosphate + ADP. The catalysed reaction is a ribonucleoside 5'-diphosphate + ATP = a ribonucleoside 5'-triphosphate + ADP. Major role in the synthesis of nucleoside triphosphates other than ATP. The ATP gamma phosphate is transferred to the NDP beta phosphate via a ping-pong mechanism, using a phosphorylated active-site intermediate. This chain is Nucleoside diphosphate kinase, found in Bradyrhizobium sp. (strain BTAi1 / ATCC BAA-1182).